Reading from the N-terminus, the 1001-residue chain is Serine/threonine-protein kinase TAO1 (1001 aa).

S9 carries the post-translational modification Phosphoserine. Residues F28–V281 form the Protein kinase domain. ATP is bound by residues I34–V42 and K57. Residue D151 is the Proton acceptor of the active site. 2 disordered regions span residues P324–E380 and E404–R433. A compositionally biased stretch (low complexity) spans S350–S370. Phosphoserine is present on residues S421 and S445. Residues S458–M651 adopt a coiled-coil conformation. The disordered stretch occupies residues K567–K587. Residues P577–K587 are compositionally biased toward basic and acidic residues. T669 is subject to Phosphothreonine. Positions K754–A877 form a coiled coil. Residues P905–T1001 form a disordered region. The span at H921–P930 shows a compositional bias: low complexity. S965 is modified (phosphoserine). Polar residues predominate over residues G975–T1001.

The protein belongs to the protein kinase superfamily. STE Ser/Thr protein kinase family. STE20 subfamily. Self-associates. Interacts with MAP2K3. Interacts with SPRED1. Interacts with TESK1; the interaction inhibits TAOK1 kinase activity. Interacts with MAP3K7. Post-translationally, proteolytically processed by caspase-3 (CASP3). Autophosphorylated. Phosphorylated by ATM in response to DNA damage. Phosphorylated by LRRK2.

The protein resides in the cytoplasm. It catalyses the reaction L-seryl-[protein] + ATP = O-phospho-L-seryl-[protein] + ADP + H(+). The enzyme catalyses L-threonyl-[protein] + ATP = O-phospho-L-threonyl-[protein] + ADP + H(+). Its activity is regulated as follows. Serine/threonine-protein kinase activity is inhibited by SPRED1. In terms of biological role, serine/threonine-protein kinase involved in various processes such as p38/MAPK14 stress-activated MAPK cascade, DNA damage response and regulation of cytoskeleton stability. Phosphorylates MAP2K3, MAP2K6 and MARK2. Acts as an activator of the p38/MAPK14 stress-activated MAPK cascade by mediating phosphorylation and subsequent activation of the upstream MAP2K3 and MAP2K6 kinases. Involved in G-protein coupled receptor signaling to p38/MAPK14. In response to DNA damage, involved in the G2/M transition DNA damage checkpoint by activating the p38/MAPK14 stress-activated MAPK cascade, probably by mediating phosphorylation of MAP2K3 and MAP2K6. Acts as a regulator of cytoskeleton stability by phosphorylating 'Thr-208' of MARK2, leading to activate MARK2 kinase activity and subsequent phosphorylation and detachment of MAPT/TAU from microtubules. Also acts as a regulator of apoptosis: regulates apoptotic morphological changes, including cell contraction, membrane blebbing and apoptotic bodies formation via activation of the MAPK8/JNK cascade. During fetal development, it plays an essential role in the regulation of neuronal differentiation and migration to the cortical plate. This chain is Serine/threonine-protein kinase TAO1 (Taok1), found in Mus musculus (Mouse).